The primary structure comprises 206 residues: Uridine kinase (206 aa).

Residue 9-16 (GGSGSGKT) coordinates ATP.

The protein belongs to the uridine kinase family.

It localises to the cytoplasm. The enzyme catalyses uridine + ATP = UMP + ADP + H(+). It carries out the reaction cytidine + ATP = CMP + ADP + H(+). Its pathway is pyrimidine metabolism; CTP biosynthesis via salvage pathway; CTP from cytidine: step 1/3. It participates in pyrimidine metabolism; UMP biosynthesis via salvage pathway; UMP from uridine: step 1/1. The chain is Uridine kinase from Borrelia duttonii (strain Ly).